Here is a 1541-residue protein sequence, read N- to C-terminus: Regulator of G-protein signaling loco (1541 aa).

The segment at 1 to 66 (MHHHHPPLPI…RRKKRANYNY (66 aa)) is disordered. Positions 11–36 (TGASGSTAVGTGAAAAEDASPAANSG) are enriched in low complexity. Positions 40–53 (ISTSTTPSGSNSQQ) are enriched in polar residues. The 78-residue stretch at 71-148 (TVEVRRGYNG…SIRMQIAENY (78 aa)) folds into the PDZ domain. The tract at residues 182–222 (AKLHRLRNSPQKKLNPPEAVEPHKSKSSPDHPTLKPVLEDP) is disordered. Positions 201-214 (VEPHKSKSSPDHPT) are enriched in basic and acidic residues. In terms of domain architecture, PID spans 247-423 (AALECRVIVG…VVNLVRSMYT (177 aa)). Disordered stretches follow at residues 449–473 (GAVAAAHSPQPSNHSEISTTTSNSD) and 708–761 (SEPD…ASMN). Composition is skewed to polar residues over residues 457–473 (PQPSNHSEISTTTSNSD) and 744–761 (EQQQLGQSSPVRRTASMN). One can recognise an RGS domain in the interval 827-943 (SFERMLQDAA…IRSDLYKSCV (117 aa)). The segment at 978–1004 (SASNAEDRRRKSLLPWHRKTRSKSRDR) is disordered. Over residues 987–999 (RKSLLPWHRKTRS) the composition is skewed to basic residues. RBD domains follow at residues 1072-1142 (SLCR…IERR) and 1143-1213 (VAFK…IVMV). Positions 1258 to 1327 (DAAASEKSRP…SEEAATTQAV (70 aa)) are disordered. Residues 1273 to 1285 (MKSNEAPSETSSL) show a composition bias toward polar residues. Low complexity predominate over residues 1312-1325 (TSSSQQSEEAATTQ). Residues 1354 to 1376 (QDELLEGLKRAQLARLEDQRGTE) form the GoLoco domain. A disordered region spans residues 1410 to 1513 (KVPATPTEIP…ASKPGTFASK (104 aa)). Over residues 1460–1469 (APPPLPPKPK) the composition is skewed to pro residues. Positions 1483 to 1499 (PTGNYCNKYSPSKQVPT) are enriched in polar residues.

Interacts (via GoLoco and RGS domains) with Galphai (via GDP- or GTP-bound forms). In terms of tissue distribution, expressed in surface and longitudinal glial cells, gut and heart (at protein level).

It localises to the cytoplasm. The protein localises to the cell membrane. It is found in the apical cell membrane. Functionally, acts as a regulator of G protein signaling (RGS). Modulates G protein alpha subunits nucleotide exchange and hydrolysis activities by functioning either as a GTPase-activating protein (GAP), thereby driving G protein alpha subunits into their inactive GDP-bound form, or as a GDP-dissociation inhibitor (GDI). Confers GDI and GAP activities on G(i) alpha subunit Galphai. Confers GAP activity on G(o)-alpha subunit Galphao and G(i) alpha subunit Galphai. Involved in the dorsal-ventral axis formation of the egg. Acts as a G-protein signaling for glial cell differentiation during embryogenesis; Galphai, Galphao and the G-protein coupled receptor, moody, are required in the surface glia to achieve effective insulation of the nerve cord. May be essential for nurse cell dumping during oogenesis. Required in neuroblast asymmetrical cell division. Plays a role in stress resistance and life span control. This Drosophila melanogaster (Fruit fly) protein is Regulator of G-protein signaling loco (loco).